A 517-amino-acid polypeptide reads, in one-letter code: Protein ERGIC-53 (517 aa).

The N-terminal stretch at 1–30 is a signal peptide; it reads MAVSRRRGPQAGAQSFFCALLLSFSQFVGS. Residues 31 to 484 are Lumenal-facing; that stretch reads DGMGGDAAAP…DLPAFPSCLS (454 aa). The L-type lectin-like domain maps to 52 to 275; that stretch reads RRFEYKYSFK…DVLSFLTFQL (224 aa). Positions 96 and 129 each coordinate a carbohydrate. Positions 160, 162, 163, 164, 165, 169, and 170 each coordinate Ca(2+). N164 contributes to the a carbohydrate binding site. An a carbohydrate-binding site is contributed by H186. D189 is a Ca(2+) binding site. An intrachain disulfide couples C198 to C238. An a carbohydrate-binding site is contributed by 259–261; sequence GGL. Disordered stretches follow at residues 276-297 and 377-396; these read TEPG…KEKY and EISR…SQQE. Residues 278–297 show a composition bias toward basic and acidic residues; sequence PGKEPPTPEKDISEKEKEKY. S433 bears the Phosphoserine mark. The chain crosses the membrane as a helical span at residues 485 to 505; that stretch reads TVHFVIFIVVQTVLFIGYIMY. At 506-517 the chain is on the cytoplasmic side; sequence RTQQEAAAKKFF. The segment at 506–517 is mediates interaction with RAB3GAP1, RAB3GAP2 and UBXN6; that stretch reads RTQQEAAAKKFF. Residues 516 to 517 carry the ER export motif motif; the sequence is FF.

As to quaternary structure, exists both as a covalent disulfide-linked homohexamer, and a complex of three disulfide-linked dimers non-covalently kept together. Interacts with MCFD2. May interact with TMEM115. Interacts with RAB3GAP1 and RAB3GAP2. Interacts with UBXN6. Interacts with SERPINA1/alpha1-antitrypsin. Interacts with BET1.

Its subcellular location is the endoplasmic reticulum-Golgi intermediate compartment membrane. The protein resides in the golgi apparatus membrane. It localises to the endoplasmic reticulum membrane. Its function is as follows. Mannose-specific lectin. May recognize sugar residues of glycoproteins, glycolipids, or glycosylphosphatidyl inositol anchors and may be involved in the sorting or recycling of proteins, lipids, or both. The LMAN1-MCFD2 complex forms a specific cargo receptor for the ER-to-Golgi transport of selected proteins. In Rattus norvegicus (Rat), this protein is Protein ERGIC-53 (Lman1).